The following is a 251-amino-acid chain: MNLNSIPAFEDNYIWVLNDDEGKCLLVDPGEAEPVFRALEENQWQPVAILLTHHHHDHTGGVKALVARFPDITVYGPEETRSKGAQVVVNDGEKFNILGCEFLAFSTPGHTLGHFSYFSFPYLFCGDTMFSAGCGRLFEGTPAQMYQSFQKINALPEDTLICCAHEYTLSNLKFLVAILPDDPALTQYYREVNELRAKNQKTLPSILKNERQINLYLRLEDDDLIDKINPDLRLSTPEERFAWLRSKKDNF.

Residues His53, His55, Asp57, His58, His110, Asp127, and His165 each coordinate Zn(2+).

This sequence belongs to the metallo-beta-lactamase superfamily. Glyoxalase II family. Monomer. Zn(2+) is required as a cofactor.

It catalyses the reaction an S-(2-hydroxyacyl)glutathione + H2O = a 2-hydroxy carboxylate + glutathione + H(+). Its pathway is secondary metabolite metabolism; methylglyoxal degradation; (R)-lactate from methylglyoxal: step 2/2. In terms of biological role, thiolesterase that catalyzes the hydrolysis of S-D-lactoyl-glutathione to form glutathione and D-lactic acid. In Cronobacter sakazakii (strain ATCC BAA-894) (Enterobacter sakazakii), this protein is Hydroxyacylglutathione hydrolase.